Here is a 333-residue protein sequence, read N- to C-terminus: Adenosine deaminase (333 aa).

Positions 12 and 14 each coordinate Zn(2+). Residues H14, D16, and G170 each coordinate substrate. Zn(2+) is bound at residue H197. The active-site Proton donor is E200. Residue D278 coordinates Zn(2+). D279 serves as a coordination point for substrate.

Belongs to the metallo-dependent hydrolases superfamily. Adenosine and AMP deaminases family. Adenosine deaminase subfamily. It depends on Zn(2+) as a cofactor.

The enzyme catalyses adenosine + H2O + H(+) = inosine + NH4(+). It carries out the reaction 2'-deoxyadenosine + H2O + H(+) = 2'-deoxyinosine + NH4(+). Its function is as follows. Catalyzes the hydrolytic deamination of adenosine and 2-deoxyadenosine. The polypeptide is Adenosine deaminase (Salmonella schwarzengrund (strain CVM19633)).